The primary structure comprises 473 residues: MAAAAVAADSKIDGLRDAVAKLGEISENEKAGFISLVSRYLSGEAEQIEWSKIQTPTDEVVVPYDTLAPPPEDLDAMKALLDKLVVLKLNGGLGTTMGCTGPKSVIEVRNGFTFLDLIVIQIESLNKKYGCSVPLLLMNSFNTHDDTQKIVEKYSNSNIEIHTFNQSQYPRIVTEDFLPLPSKGQTGKDGWYPPGHGDVFPSLNNSGKLDTLLSQGKEYVFVANSDNLGAIVDIKILNHLIHNQNEYCMEVTPKTLADVKGGTLISYEGRVQLLEIAQVPDEHVDEFKSIEKFKIFNTNNLWVNLKAIKRLVDAEALKMEIIPNPKEVDGVKVLQLETAAGAAIRFFEKAIGINVPRSRFLPVKATSDLLLVQSDLYTLVDGYVIRNPARVKPSNPSIELGPEFKKVANFLARFKSIPSIVELDSLKVSGDVSFGSGVVLKGNVTIAAKAGVKLEIPDGAVLENKDINGPEDI.

Residues 89-92 (LNGG), lysine 103, glutamine 166, and glycine 195 each bind UTP. Substrate is bound at residue 91–92 (GG). Substrate-binding positions include histidine 196 and 224-226 (NSD). UTP is bound by residues aspartate 226 and lysine 364.

The protein belongs to the UDPGP type 1 family.

The protein resides in the cytoplasm. The catalysed reaction is alpha-D-glucose 1-phosphate + UTP + H(+) = UDP-alpha-D-glucose + diphosphate. Functionally, plays a central role as a glucosyl donor in cellular metabolic pathways. This is UTP--glucose-1-phosphate uridylyltransferase from Hordeum vulgare (Barley).